The following is a 419-amino-acid chain: UDP-N-acetylglucosamine 1-carboxyvinyltransferase (419 aa).

22-23 (KN) contributes to the phosphoenolpyruvate binding site. UDP-N-acetyl-alpha-D-glucosamine is bound at residue arginine 91. The active-site Proton donor is cysteine 115. Cysteine 115 carries the 2-(S-cysteinyl)pyruvic acid O-phosphothioketal modification. UDP-N-acetyl-alpha-D-glucosamine-binding positions include 120–124 (RPVDL), 160–163 (KVSV), aspartate 305, and valine 327.

It belongs to the EPSP synthase family. MurA subfamily.

It localises to the cytoplasm. It carries out the reaction phosphoenolpyruvate + UDP-N-acetyl-alpha-D-glucosamine = UDP-N-acetyl-3-O-(1-carboxyvinyl)-alpha-D-glucosamine + phosphate. The protein operates within cell wall biogenesis; peptidoglycan biosynthesis. Its function is as follows. Cell wall formation. Adds enolpyruvyl to UDP-N-acetylglucosamine. This is UDP-N-acetylglucosamine 1-carboxyvinyltransferase from Salmonella schwarzengrund (strain CVM19633).